The sequence spans 324 residues: MWRSVIAGCGSYLPANKVTNANLAERVETTDAWIRERTGILVRHFAAEGEKTSDLAMAAARAALADAGVDAAEVDLIVLATATPDQTFPATATRVQAGLGCRPGAPAFDIQAVCSGFLYALSVADALIKAGQARTALVIGAETFSRILDFTDRTTCVLFGDGAGAVVLRATPSTGDGGERGILSTHLHADGRHHDLLYVDGGPSSTGTVGHLRMQGREVFRHAVTNLYEVVLEALAANGLQADAIDWVVPHQANQRILDGTAKKLGIDPAKVISTIALHANTSAASVPLALCEARRDGRIQPGQLILLEAMGGGFTWGSALVRL.

Active-site residues include Cys-114 and His-251. The segment at 252 to 256 (QANQR) is ACP-binding. Asn-281 is a catalytic residue.

The protein belongs to the thiolase-like superfamily. FabH family. Homodimer.

The protein localises to the cytoplasm. The enzyme catalyses malonyl-[ACP] + acetyl-CoA + H(+) = 3-oxobutanoyl-[ACP] + CO2 + CoA. Its pathway is lipid metabolism; fatty acid biosynthesis. Functionally, catalyzes the condensation reaction of fatty acid synthesis by the addition to an acyl acceptor of two carbons from malonyl-ACP. Catalyzes the first condensation reaction which initiates fatty acid synthesis and may therefore play a role in governing the total rate of fatty acid production. Possesses both acetoacetyl-ACP synthase and acetyl transacylase activities. Its substrate specificity determines the biosynthesis of branched-chain and/or straight-chain of fatty acids. The chain is Beta-ketoacyl-[acyl-carrier-protein] synthase III from Rhodospirillum rubrum (strain ATCC 11170 / ATH 1.1.1 / DSM 467 / LMG 4362 / NCIMB 8255 / S1).